Consider the following 406-residue polypeptide: Probable cysteine desulfurase (406 aa).

Lysine 224 bears the N6-(pyridoxal phosphate)lysine mark. The Cysteine persulfide intermediate role is filled by cysteine 361.

It belongs to the class-V pyridoxal-phosphate-dependent aminotransferase family. Csd subfamily. Pyridoxal 5'-phosphate serves as cofactor.

The catalysed reaction is (sulfur carrier)-H + L-cysteine = (sulfur carrier)-SH + L-alanine. Its function is as follows. Catalyzes the removal of elemental sulfur and selenium atoms from L-cysteine, L-cystine, L-selenocysteine, and L-selenocystine to produce L-alanine. In Halalkalibacterium halodurans (strain ATCC BAA-125 / DSM 18197 / FERM 7344 / JCM 9153 / C-125) (Bacillus halodurans), this protein is Probable cysteine desulfurase (csd).